The chain runs to 46 residues: uncharacterized protein (46 aa).

This is an uncharacterized protein from Saccharomyces cerevisiae (strain ATCC 204508 / S288c) (Baker's yeast).